The primary structure comprises 325 residues: Dimethylsulfide dehydrogenase subunit beta (325 aa).

4Fe-4S ferredoxin-type domains are found at residues 6-35, 123-154, and 156-185; these read ISMV…RNGR, SYYF…KRQE, and GIVL…FNEQ. Residues Cys-15, Cys-18, Cys-21, Cys-25, Cys-132, Cys-135, and Cys-140 each coordinate [4Fe-4S] cluster. Residues Cys-144, Cys-165, and Cys-171 each contribute to the [3Fe-4S] cluster site. Residues Cys-175, Cys-192, Cys-195, Cys-207, and Cys-211 each coordinate [4Fe-4S] cluster.

As to quaternary structure, heterotrimer of alpha, beta and gamma subunits. Requires [3Fe-4S] cluster as cofactor. [4Fe-4S] cluster is required as a cofactor.

The protein resides in the periplasm. Its function is as follows. Electron transfer subunit of the dehydrogenase during anaerobic growth on dimethyl sulfide. In Rhodovulum sulfidophilum (Rhodobacter sulfidophilus), this protein is Dimethylsulfide dehydrogenase subunit beta (ddhB).